Consider the following 115-residue polypeptide: Cyclin-dependent protein kinase inhibitor SMR3 (115 aa).

A compositionally biased stretch (basic and acidic residues) spans 17 to 36; the sequence is KIRLPTRPELDIPDSDHEDP. The tract at residues 17–82 is disordered; that stretch reads KIRLPTRPEL…RSSGTKRKLT (66 aa). Residues 67–81 are compositionally biased toward basic residues; it reads RKPKPNRSSGTKRKL.

Interacts with CDKA-1 and D-type cyclins. In terms of tissue distribution, expressed at low levels in roots and stems.

It localises to the nucleus. Functionally, probable cyclin-dependent protein kinase (CDK) inhibitor that functions as a repressor of mitosis in the endoreduplication cell cycle. In Arabidopsis thaliana (Mouse-ear cress), this protein is Cyclin-dependent protein kinase inhibitor SMR3.